Here is a 242-residue protein sequence, read N- to C-terminus: tRNA pseudouridine synthase A (242 aa).

The active-site Nucleophile is D51. A substrate-binding site is contributed by Y107.

The protein belongs to the tRNA pseudouridine synthase TruA family. Homodimer.

The catalysed reaction is uridine(38/39/40) in tRNA = pseudouridine(38/39/40) in tRNA. Functionally, formation of pseudouridine at positions 38, 39 and 40 in the anticodon stem and loop of transfer RNAs. This chain is tRNA pseudouridine synthase A, found in Helicobacter pylori (strain HPAG1).